Consider the following 549-residue polypeptide: DDB1- and CUL4-associated factor 11 (549 aa).

Residues 1–24 (MGSRNSSSAGSGSLEPSEGLSRRG) are compositionally biased toward low complexity. Residues 1-40 (MGSRNSSSAGSGSLEPSEGLSRRGTGLRRSEEEEEEDEDV) form a disordered region. Phosphoserine occurs at positions 73 and 75. 7 WD repeats span residues 170–210 (TYSQ…HKFK), 216–258 (DVGW…TALD), 263–302 (ERRF…RTLQ), 305–345 (SHED…EDDP), 353–392 (GHQD…SREG), 435–480 (GVLH…KKLT), and 481–520 (NHKA…YFQD).

In terms of assembly, interacts with DDB1 and CUL4A.

The protein operates within protein modification; protein ubiquitination. Functionally, may function as a substrate receptor for CUL4-DDB1 E3 ubiquitin-protein ligase complex. The protein is DDB1- and CUL4-associated factor 11 (Dcaf11) of Mus musculus (Mouse).